A 225-amino-acid chain; its full sequence is Transcription factor HES-7 (225 aa).

Residues 12 to 69 form the bHLH domain; the sequence is GPKMLKPLVEKRRRDRINRSLEELRLLLLERTRDQNLRNPKLEKAEILEFAVGYLRER. The region spanning 92-122 is the Orange domain; sequence YLSGFRECLLRLAAFAHDASPAARAQLFSAL. The interval 125–225 is disordered; the sequence is YLRPKPPRPK…PPPAFWRPWP (101 aa). Residues 147–158 show a composition bias toward low complexity; it reads LDPAAPALGPAL. The segment covering 212–225 has biased composition (pro residues); it reads APLPPPPAFWRPWP. Positions 221–224 match the WRPW motif motif; that stretch reads WRPW.

As to quaternary structure, transcription repression requires formation of a complex with a corepressor protein of the Groucho/TLE family.

The protein resides in the nucleus. Functionally, transcriptional repressor. Represses transcription from both N box- and E box-containing promoters. May with HES1, cooperatively regulate somite formation in the presomitic mesoderm (PSM). May function as a segmentation clock, which is essential for coordinated somite segmentation. The chain is Transcription factor HES-7 (HES7) from Homo sapiens (Human).